The sequence spans 542 residues: Chaperonin GroEL (542 aa).

Residues 29-32 (TLGP), 86-90 (DGTTT), G413, 476-478 (NAA), and D492 contribute to the ATP site. The disordered stretch occupies residues 522-542 (PDENGPAAVPDMGMGGMGGMM).

This sequence belongs to the chaperonin (HSP60) family. As to quaternary structure, forms a cylinder of 14 subunits composed of two heptameric rings stacked back-to-back. Interacts with the co-chaperonin GroES.

The protein resides in the cytoplasm. The catalysed reaction is ATP + H2O + a folded polypeptide = ADP + phosphate + an unfolded polypeptide.. Functionally, together with its co-chaperonin GroES, plays an essential role in assisting protein folding. The GroEL-GroES system forms a nano-cage that allows encapsulation of the non-native substrate proteins and provides a physical environment optimized to promote and accelerate protein folding. This chain is Chaperonin GroEL, found in Listeria monocytogenes serotype 4a (strain HCC23).